The following is a 417-amino-acid chain: E3 ubiquitin-protein ligase RNF135 (417 aa).

Residues 21 to 67 form an RING-type zinc finger; the sequence is CIICQGLLDQPTTLPCGHSFCLRCLHDLWVSKRGAVDGCPWACPICR. Disordered stretches follow at residues 95 to 118 and 143 to 173; these read EVEAGSEPEPAPAPRSAPQVTVQK and TQRPNLGSGQDNAQGTPPTDSSSEGEHSLDS. Coiled coils occupy residues 121–145 and 180–204; these read TNVIQELTDMVRQLVDDVKSLQTQR and SISQKKIQEILHNLEEIQEKLQGSV. The span at 143 to 164 shows a compositional bias: polar residues; the sequence is TQRPNLGSGQDNAQGTPPTDSS. The B30.2/SPRY domain occupies 225-417; sequence PDQRRPAPRK…NYLEIKQLNT (193 aa).

As to quaternary structure, homodimer. Interacts (homodimer) with RIGI (double-stranded RNA-bound oligomeric form); involved in both RIGI ubiquitination, oligomerization into filaments associated with viral RNAs and the bridging of these filaments. Interacts with UBE2D3 and UBE2N; E2 ubiquitin ligases involved in RNF135-mediated ubiquitination of RIGI and activation of the RIG-I signaling pathway. Interacts with PCBP2. In terms of tissue distribution, ubiquitously expressed.

Its subcellular location is the cytoplasm. The protein resides in the stress granule. The enzyme catalyses S-ubiquitinyl-[E2 ubiquitin-conjugating enzyme]-L-cysteine + [acceptor protein]-L-lysine = [E2 ubiquitin-conjugating enzyme]-L-cysteine + N(6)-ubiquitinyl-[acceptor protein]-L-lysine.. It functions in the pathway protein modification; protein ubiquitination. E2-dependent E3 ubiquitin-protein ligase that functions as a RIGI coreceptor in the sensing of viral RNAs in cell cytoplasm and the activation of the antiviral innate immune response. Together with the UBE2D3, UBE2N and UB2V1 E2 ligases, catalyzes the 'Lys-63'-linked polyubiquitination of RIGI oligomerized on viral RNAs, an essential step in the activation of the RIG-I signaling pathway. Through a ubiquitin-independent parallel mechanism, which consists in bridging RIGI filaments forming on longer viral RNAs, further activates the RIG-I signaling pathway. This second mechanism that synergizes with the ubiquitin-dependent one would thereby allow an RNA length-dependent regulation of the RIG-I signaling pathway. Associated with the E2 ligase UBE2N, also constitutively synthesizes unanchored 'Lys-63'-linked polyubiquitin chains that may also activate the RIG-I signaling pathway. It is not involved in the innate immune response against DNA viruses. The chain is E3 ubiquitin-protein ligase RNF135 from Mus musculus (Mouse).